The sequence spans 260 residues: tRNA pseudouridine synthase A (260 aa).

Aspartate 52 (nucleophile) is an active-site residue. Tyrosine 111 serves as a coordination point for substrate.

It belongs to the tRNA pseudouridine synthase TruA family. Homodimer.

It catalyses the reaction uridine(38/39/40) in tRNA = pseudouridine(38/39/40) in tRNA. Functionally, formation of pseudouridine at positions 38, 39 and 40 in the anticodon stem and loop of transfer RNAs. The polypeptide is tRNA pseudouridine synthase A (Beijerinckia indica subsp. indica (strain ATCC 9039 / DSM 1715 / NCIMB 8712)).